Reading from the N-terminus, the 347-residue chain is Phosphate acyltransferase (347 aa).

The protein belongs to the PlsX family. In terms of assembly, homodimer. Probably interacts with PlsY.

It is found in the cytoplasm. It catalyses the reaction a fatty acyl-[ACP] + phosphate = an acyl phosphate + holo-[ACP]. It participates in lipid metabolism; phospholipid metabolism. Its function is as follows. Catalyzes the reversible formation of acyl-phosphate (acyl-PO(4)) from acyl-[acyl-carrier-protein] (acyl-ACP). This enzyme utilizes acyl-ACP as fatty acyl donor, but not acyl-CoA. The protein is Phosphate acyltransferase of Rhizobium meliloti (strain 1021) (Ensifer meliloti).